The following is a 710-amino-acid chain: Polyribonucleotide nucleotidyltransferase (710 aa).

Mg(2+) contacts are provided by Asp-489 and Asp-495. Residues 556–615 enclose the KH domain; the sequence is PKIDTIKIDVDKIKVVIGKGGETIDKIIAETGVKIDIDDEGNVSIYSSDQAAIDRTKEII. The 69-residue stretch at 625–693 folds into the S1 motif domain; that stretch reads GEVYHAKVIR…EKGRVDASMK (69 aa). The disordered stretch occupies residues 691–710; that stretch reads SMKALIPRPPKPEKKEEKHD. Basic and acidic residues predominate over residues 700–710; sequence PKPEKKEEKHD.

The protein belongs to the polyribonucleotide nucleotidyltransferase family. Requires Mg(2+) as cofactor.

The protein resides in the cytoplasm. The catalysed reaction is RNA(n+1) + phosphate = RNA(n) + a ribonucleoside 5'-diphosphate. Its function is as follows. Involved in mRNA degradation. Catalyzes the phosphorolysis of single-stranded polyribonucleotides processively in the 3'- to 5'-direction. The polypeptide is Polyribonucleotide nucleotidyltransferase (Streptococcus pyogenes serotype M18 (strain MGAS8232)).